Here is a 457-residue protein sequence, read N- to C-terminus: MSQYVSRLGRRSPAASPRLRLNRKPRRVAMLSVHTSPLHQPGTGDAGGMNVYIVELAQRLAAINIEVEIFTRATTAALPPAVELAPGVLVRHVDAGPYEGLAKEELPAQLCAFTHGVMQAWAGHRPGHYDLVHSHYWLSGHVGWLAAQRWGAPLVHAMHTMAKVKNANLADGDTPEPAARVIGETQIVAASDRLIANTAEEADELVRHYAADPDKVAVVHPGVNLERFRPFPKGRVPGPGQHGNARAAARARLGLPQDALIPLFAGRIQPLKAPDILLRAVAVLLDERPELRSRIVVPVVGGPSGSGLAKPEGLQKLAARLGIADVVRFRPPVGQEQLADWFRAASVLVMPSYSESFGLVAIEAQAAGTPVLAAAVGGLPVAVRDGHTGRLVHGHDPAAYARVLRDFADNPDLTPRMGDAAARHAQSFGWDSAAATTADVYTAAIQSYRRRVRSHHG.

His-34 is a 1D-myo-inositol 3-phosphate binding site. UDP-N-acetyl-alpha-D-glucosamine contacts are provided by residues 40 to 41 and Gly-48; that span reads QP. 1D-myo-inositol 3-phosphate is bound by residues 45–50, Lys-103, Tyr-136, Thr-160, and Arg-180; that span reads DAGGMN. Positions 267, 272, and 333 each coordinate UDP-N-acetyl-alpha-D-glucosamine. Residues Phe-342, Arg-343, and Ala-345 each coordinate Mg(2+). UDP-N-acetyl-alpha-D-glucosamine contacts are provided by Glu-355 and Glu-363. Thr-369 contributes to the Mg(2+) binding site.

The protein belongs to the glycosyltransferase group 1 family. MshA subfamily. In terms of assembly, homodimer.

The enzyme catalyses 1D-myo-inositol 3-phosphate + UDP-N-acetyl-alpha-D-glucosamine = 1D-myo-inositol 2-acetamido-2-deoxy-alpha-D-glucopyranoside 3-phosphate + UDP + H(+). Its function is as follows. Catalyzes the transfer of a N-acetyl-glucosamine moiety to 1D-myo-inositol 3-phosphate to produce 1D-myo-inositol 2-acetamido-2-deoxy-glucopyranoside 3-phosphate in the mycothiol biosynthesis pathway. The protein is D-inositol 3-phosphate glycosyltransferase of Streptomyces coelicolor (strain ATCC BAA-471 / A3(2) / M145).